Here is a 326-residue protein sequence, read N- to C-terminus: MSLGGGNVPVLGAGGWGTALAVAVTRAGHRATLWARRPDFAARLASERENGEYLPGVLLPAEVSVTSDLTHAVAGADFALVVVPSVGVPDLLAALPRDLGIVLCAKGLAPDGGRLTDLARSLGFARVAVLSGPNHAEEVGRGLPAATVVASADLELAGKVQATLISPTLRVYTSADEVGVELGGVLKNVIALATGLVDGLKLGDNAKAALITRGLREMGRYLVSQGAHEDTVYGLSGLGDLVATATSRHSRNRAAGEAIARGEHPQQGGKVVEGLRTAGLLDAWASAHGHDLPIVHAVAKVASGEWTPDVGIRSLMGRGAKSELEE.

Residues W16, R36, R37, and K106 each contribute to the NADPH site. K106 and G132 together coordinate sn-glycerol 3-phosphate. A136 contributes to the NADPH binding site. K187, D240, S250, R251, and N252 together coordinate sn-glycerol 3-phosphate. The active-site Proton acceptor is K187. R251 contributes to the NADPH binding site. Residues V271 and E273 each coordinate NADPH.

This sequence belongs to the NAD-dependent glycerol-3-phosphate dehydrogenase family.

It localises to the cytoplasm. It carries out the reaction sn-glycerol 3-phosphate + NAD(+) = dihydroxyacetone phosphate + NADH + H(+). The enzyme catalyses sn-glycerol 3-phosphate + NADP(+) = dihydroxyacetone phosphate + NADPH + H(+). It functions in the pathway membrane lipid metabolism; glycerophospholipid metabolism. In terms of biological role, catalyzes the reduction of the glycolytic intermediate dihydroxyacetone phosphate (DHAP) to sn-glycerol 3-phosphate (G3P), the key precursor for phospholipid synthesis. In Deinococcus geothermalis (strain DSM 11300 / CIP 105573 / AG-3a), this protein is Glycerol-3-phosphate dehydrogenase [NAD(P)+].